Consider the following 57-residue polypeptide: MLFKSLQSISSVSSIQKNQISSVSVGSSQSNNNTALLDAAAVVVVPGLLAATAVAHI.

A helical membrane pass occupies residues 34–51 (TALLDAAAVVVVPGLLAA).

The protein resides in the membrane. This is an uncharacterized protein from Dictyostelium discoideum (Social amoeba).